The sequence spans 339 residues: N-acetylmuramate/N-acetylglucosamine kinase (339 aa).

The protein belongs to the kinase AmgK family.

The catalysed reaction is N-acetyl-D-muramate + ATP = N-acetyl-alpha-D-muramate 1-phosphate + ADP + H(+). It carries out the reaction N-acetyl-D-glucosamine + ATP = N-acetyl-alpha-D-glucosamine 1-phosphate + ADP + H(+). The protein operates within cell wall biogenesis; peptidoglycan recycling. In terms of biological role, sugar kinase that catalyzes the ATP-dependent phosphorylation of N-acetylmuramate (MurNAc) and N-acetylglucosamine (GlcNAc) at its C1 hydroxyl group, leading to MurNAc alpha-1P and GlcNAc alpha-1P, respectively. Is involved in peptidoglycan recycling as part of a cell wall recycling pathway that bypasses de novo biosynthesis of the peptidoglycan precursor UDP-MurNAc. Plays a role in intrinsic resistance to fosfomycin, which targets the de novo synthesis of UDP-MurNAc. Is also able to use N-acetylgalactosamine (GalNAc) as a substrate, but not N-acetylmannosamine, N-deacetylated sugars or glucose. In Pseudomonas putida (strain ATCC 47054 / DSM 6125 / CFBP 8728 / NCIMB 11950 / KT2440), this protein is N-acetylmuramate/N-acetylglucosamine kinase.